Reading from the N-terminus, the 602-residue chain is Cholinesterase (602 aa).

Residues 1–28 (MQSKGTIISIQFLLRFLLLWVLIGKSHT) form the signal peptide. A glycan (N-linked (GlcNAc...) asparagine) is linked at N85. Residues C93 and C120 are joined by a disulfide bond. N-linked (GlcNAc...) asparagine glycosylation occurs at N134. 144-145 (GG) is a binding site for substrate. S226 (acyl-ester intermediate) is an active-site residue. S226 carries the post-translational modification Phosphoserine. N-linked (GlcNAc...) asparagine glycosylation is found at N269 and N284. The cysteines at positions 280 and 291 are disulfide-linked. E353 acts as the Charge relay system in catalysis. N-linked (GlcNAc...) asparagine glycosylation occurs at N369. C428 and C547 form a disulfide bridge. H466 (charge relay system) is an active-site residue. N-linked (GlcNAc...) asparagine glycosylation is found at N483, N509, N513, and N514.

The protein belongs to the type-B carboxylesterase/lipase family. As to quaternary structure, homotetramer; disulfide-linked. Dimer of dimers.

It is found in the secreted. It catalyses the reaction an acylcholine + H2O = a carboxylate + choline + H(+). Its function is as follows. Esterase with broad substrate specificity. Contributes to the inactivation of the neurotransmitter acetylcholine. Can degrade neurotoxic organophosphate esters. The sequence is that of Cholinesterase (BCHE) from Panthera tigris tigris (Bengal tiger).